The primary structure comprises 100 residues: Small ribosomal subunit protein uS14c (100 aa).

Belongs to the universal ribosomal protein uS14 family. As to quaternary structure, part of the 30S ribosomal subunit.

The protein localises to the plastid. Its function is as follows. Binds 16S rRNA, required for the assembly of 30S particles. The chain is Small ribosomal subunit protein uS14c from Cuscuta exaltata (Tall dodder).